The primary structure comprises 63 residues: UPF0370 protein PC1_1167 (63 aa).

The helical transmembrane segment at 3–23 (WLADYWWIILIILIGMLINGI) threads the bilayer. The segment at 37 to 63 (NKPKLPPHRDNNDKWDDEDDDWPKKKP) is disordered.

This sequence belongs to the UPF0370 family.

The protein resides in the cell membrane. The protein is UPF0370 protein PC1_1167 of Pectobacterium carotovorum subsp. carotovorum (strain PC1).